The sequence spans 276 residues: Formamidopyrimidine-DNA glycosylase (276 aa).

Proline 2 (schiff-base intermediate with DNA) is an active-site residue. The Proton donor role is filled by glutamate 3. Lysine 58 functions as the Proton donor; for beta-elimination activity in the catalytic mechanism. DNA-binding residues include histidine 94, arginine 112, and arginine 157. Residues 242–276 (FVYDRAGEPCRVCGAPIRQIVQGQRSTYFCPNCQR) form an FPG-type zinc finger. The active-site Proton donor; for delta-elimination activity is the arginine 266.

The protein belongs to the FPG family. Monomer. It depends on Zn(2+) as a cofactor.

It carries out the reaction Hydrolysis of DNA containing ring-opened 7-methylguanine residues, releasing 2,6-diamino-4-hydroxy-5-(N-methyl)formamidopyrimidine.. The enzyme catalyses 2'-deoxyribonucleotide-(2'-deoxyribose 5'-phosphate)-2'-deoxyribonucleotide-DNA = a 3'-end 2'-deoxyribonucleotide-(2,3-dehydro-2,3-deoxyribose 5'-phosphate)-DNA + a 5'-end 5'-phospho-2'-deoxyribonucleoside-DNA + H(+). Its function is as follows. Involved in base excision repair of DNA damaged by oxidation or by mutagenic agents. Acts as a DNA glycosylase that recognizes and removes damaged bases. Has a preference for oxidized purines, such as 7,8-dihydro-8-oxoguanine (8-oxoG). Has AP (apurinic/apyrimidinic) lyase activity and introduces nicks in the DNA strand. Cleaves the DNA backbone by beta-delta elimination to generate a single-strand break at the site of the removed base with both 3'- and 5'-phosphates. The protein is Formamidopyrimidine-DNA glycosylase of Burkholderia pseudomallei (strain 1710b).